We begin with the raw amino-acid sequence, 100 residues long: UPF0298 protein lp_2135 (100 aa).

This sequence belongs to the UPF0298 family.

It is found in the cytoplasm. The protein is UPF0298 protein lp_2135 of Lactiplantibacillus plantarum (strain ATCC BAA-793 / NCIMB 8826 / WCFS1) (Lactobacillus plantarum).